Consider the following 272-residue polypeptide: Endogenous Bornavirus-like nucleoprotein 2 (272 aa).

Positions 48 to 70 are disordered; it reads MSHLRKDSQPSSPGDDAMDRSGL.

In terms of biological role, may act as an RNA-binding protein. The C-terminal region is highly homologous to the bornavirus nucleocapsid N protein that binds viral RNA and oligomerizes. The viral protein also possesses a nuclear import and a nuclear export signal. These 2 signals seem absent in EBLN-2 supporting an unrelated function in Human. In Homo sapiens (Human), this protein is Endogenous Bornavirus-like nucleoprotein 2 (EBLN2).